The following is a 306-amino-acid chain: Methionyl-tRNA formyltransferase (306 aa).

A (6S)-5,6,7,8-tetrahydrofolate-binding site is contributed by 110–113 (SLLP).

The protein belongs to the Fmt family.

The enzyme catalyses L-methionyl-tRNA(fMet) + (6R)-10-formyltetrahydrofolate = N-formyl-L-methionyl-tRNA(fMet) + (6S)-5,6,7,8-tetrahydrofolate + H(+). In terms of biological role, attaches a formyl group to the free amino group of methionyl-tRNA(fMet). The formyl group appears to play a dual role in the initiator identity of N-formylmethionyl-tRNA by promoting its recognition by IF2 and preventing the misappropriation of this tRNA by the elongation apparatus. In Brucella suis (strain ATCC 23445 / NCTC 10510), this protein is Methionyl-tRNA formyltransferase.